Consider the following 162-residue polypeptide: uncharacterized protein (162 aa).

The region spanning 6–71 (LDDLDRAILK…PIKPRKLALV (66 aa)) is the HTH asnC-type domain. Positions 25–44 (IAEISNQLKKPESTVHFRIK) form a DNA-binding region, H-T-H motif.

This is an uncharacterized protein from Pyrococcus abyssi (strain GE5 / Orsay).